The primary structure comprises 466 residues: Zinc metalloproteinase/disintegrin (466 aa).

The first 6 residues, 1–6, serve as a signal peptide directing secretion; sequence FPYQGS. The propeptide occupies 7-174; it reads SIILESGNVN…PIKKASQLIV (168 aa). Positions 180 to 377 constitute a Peptidase M12B domain; it reads RYMEIVIVVD…ENPPCILNKP (198 aa). Glu-183 and Asp-267 together coordinate Ca(2+). 3 cysteine pairs are disulfide-bonded: Cys-291-Cys-372, Cys-331-Cys-356, and Cys-333-Cys-339. Residue His-316 participates in Zn(2+) binding. The active site involves Glu-317. 2 residues coordinate Zn(2+): His-320 and His-326. The Ca(2+) site is built by Cys-372 and Asn-375. A propeptide spanning residues 377-401 is cleaved from the precursor; sequence PLRTDTVSTPVSGNELLEAGKDYDR. The Disintegrin domain occupies 385–466; the sequence is TPVSGNELLE…GDCPRNPYHA (82 aa). 3 cysteine pairs are disulfide-bonded: Cys-422–Cys-428, Cys-427–Cys-452, and Cys-440–Cys-459. The Cell attachment site signature appears at 444 to 446; sequence RGD.

This sequence belongs to the venom metalloproteinase (M12B) family. P-II subfamily. P-IIa sub-subfamily. As to quaternary structure, monomer. Requires Zn(2+) as cofactor. As to expression, expressed by the venom gland.

The protein localises to the secreted. Impairs hemostasis in the envenomed animal. Functionally, inhibits platelet aggregation induced by ADP, thrombin, platelet-activating factor and collagen. Acts by inhibiting fibrinogen interaction with platelet receptors GPIIb/GPIIIa (ITGA2B/ITGB3). The sequence is that of Zinc metalloproteinase/disintegrin from Deinagkistrodon acutus (Hundred-pace snake).